Here is a 398-residue protein sequence, read N- to C-terminus: ATP-dependent RNA helicase RhlB (398 aa).

Residues 9-37 (TRFHDFKLSNELMHAIHDLGFPYCTPIQA) carry the Q motif motif. Residues 40 to 220 (LGYTLRGQDA…KQWTTNPAIV (181 aa)) enclose the Helicase ATP-binding domain. Position 53 to 60 (53 to 60 (AQTGTGKT)) interacts with ATP. Residues 166-169 (DEAD) carry the DEAD box motif. One can recognise a Helicase C-terminal domain in the interval 243-393 (DKYKLLYNLV…MPPDELLKPV (151 aa)).

It belongs to the DEAD box helicase family. RhlB subfamily. Component of the RNA degradosome, which is a multiprotein complex involved in RNA processing and mRNA degradation.

It is found in the cytoplasm. It carries out the reaction ATP + H2O = ADP + phosphate + H(+). In terms of biological role, DEAD-box RNA helicase involved in RNA degradation. Has RNA-dependent ATPase activity and unwinds double-stranded RNA. This is ATP-dependent RNA helicase RhlB from Pseudomonas putida (strain ATCC 47054 / DSM 6125 / CFBP 8728 / NCIMB 11950 / KT2440).